A 337-amino-acid chain; its full sequence is AP2/ERF and B3 domain-containing transcription factor At1g50680 (337 aa).

The AP2/ERF DNA-binding region spans 27–84 (KYKGVVQQQNGHWGAQIYADHKRIWLGTFKSADEAATAYDSASIKLRSFDANSHRNFP). A DNA-binding region (TF-B3) is located at residues 157 to 271 (FQKELTPSDV…VKTLEGQRKN (115 aa)).

It belongs to the AP2/ERF transcription factor family. RAV subfamily.

The protein resides in the nucleus. Functionally, probably acts as a transcriptional activator. Binds to the GCC-box pathogenesis-related promoter element. May be involved in the regulation of gene expression by stress factors and by components of stress signal transduction pathways. The chain is AP2/ERF and B3 domain-containing transcription factor At1g50680 from Arabidopsis thaliana (Mouse-ear cress).